We begin with the raw amino-acid sequence, 300 residues long: Ribonuclease HIII (300 aa).

An RNase H type-2 domain is found at 83–300 (IPIIGSDEVG…THKAQALLTK (218 aa)). Residues D89, E90, and D194 each coordinate a divalent metal cation.

This sequence belongs to the RNase HII family. RnhC subfamily. Requires Mn(2+) as cofactor. Mg(2+) is required as a cofactor.

Its subcellular location is the cytoplasm. The catalysed reaction is Endonucleolytic cleavage to 5'-phosphomonoester.. Functionally, endonuclease that specifically degrades the RNA of RNA-DNA hybrids. The sequence is that of Ribonuclease HIII from Streptococcus pyogenes serotype M28 (strain MGAS6180).